The sequence spans 466 residues: MTVRVRGIYATALTRLLREAGHEVVQASGPIEDRFDGEFADERAAVTVTTTDDQQGVGVIGDHDAAAAVTDRLTELGRDTLHWSDPTPEGAIYAGTVTDTLGSGAVVDLGDGEGFLPYSSSDERVETGDTLRVQVVEASAPWTDGRPVLDTTVAVRGSLLSLVRGETASTPGTGGPAMLDLIAAEPRDGWGVSWESASEDASFDALAAALDAANDRAAAIDASLDGADAPEDCAPTRYDEGRSTVWLWFGRESRFALDEVRREVTSTMPGHHRVKAGDRAASAAVDYVEALCDDPETGETDFPFAVTTRQFGPQVGGSLSLGHGKPDGRLITLGNGEVQSVDDDGTVTIEREMSPGGTYDALGVPKEAGDIAETKVKEGRWWYPTVYRDSDGEKKGTYVNVCTPVEIFPDTARYVDLHVDVVKHADGAVERVDDDELDAAVERGHISEPLAERARSVAAAVKSALE.

An S1 motif domain is found at G90–T152.

Belongs to the FAU-1 family.

Probable RNase involved in rRNA stability through maturation and/or degradation of precursor rRNAs. Binds to RNA in loop regions with AU-rich sequences. This chain is Probable ribonuclease FAU-1, found in Haloarcula marismortui (strain ATCC 43049 / DSM 3752 / JCM 8966 / VKM B-1809) (Halobacterium marismortui).